Here is a 339-residue protein sequence, read N- to C-terminus: DNA-directed RNA polymerase subunit alpha (339 aa).

Residues 1 to 238 (MVDPIVTKNW…EQLSIFINFD (238 aa)) form an alpha N-terminal domain (alpha-NTD) region. Residues 250 to 339 (VEEQKLNENL…KAAPQGAPKV (90 aa)) form an alpha C-terminal domain (alpha-CTD) region.

Belongs to the RNA polymerase alpha chain family. Homodimer. The RNAP catalytic core consists of 2 alpha, 1 beta, 1 beta' and 1 omega subunit. When a sigma factor is associated with the core the holoenzyme is formed, which can initiate transcription.

It carries out the reaction RNA(n) + a ribonucleoside 5'-triphosphate = RNA(n+1) + diphosphate. Its function is as follows. DNA-dependent RNA polymerase catalyzes the transcription of DNA into RNA using the four ribonucleoside triphosphates as substrates. This Anaeromyxobacter dehalogenans (strain 2CP-C) protein is DNA-directed RNA polymerase subunit alpha.